A 386-amino-acid polypeptide reads, in one-letter code: Succinate--CoA ligase [ADP-forming] subunit beta (386 aa).

In terms of domain architecture, ATP-grasp spans 9–244 (KQILKKYGAV…LNEEDPTEID (236 aa)). Residues K46, 53-55 (GRG), E99, S102, and E107 each bind ATP. 2 residues coordinate Mg(2+): N199 and D213. Substrate-binding positions include N264 and 321–323 (GIM).

Belongs to the succinate/malate CoA ligase beta subunit family. Heterotetramer of two alpha and two beta subunits. Requires Mg(2+) as cofactor.

It catalyses the reaction succinate + ATP + CoA = succinyl-CoA + ADP + phosphate. The enzyme catalyses GTP + succinate + CoA = succinyl-CoA + GDP + phosphate. It participates in carbohydrate metabolism; tricarboxylic acid cycle; succinate from succinyl-CoA (ligase route): step 1/1. Its function is as follows. Succinyl-CoA synthetase functions in the citric acid cycle (TCA), coupling the hydrolysis of succinyl-CoA to the synthesis of either ATP or GTP and thus represents the only step of substrate-level phosphorylation in the TCA. The beta subunit provides nucleotide specificity of the enzyme and binds the substrate succinate, while the binding sites for coenzyme A and phosphate are found in the alpha subunit. This Pelagibacter ubique (strain HTCC1062) protein is Succinate--CoA ligase [ADP-forming] subunit beta.